The sequence spans 276 residues: Putative hydro-lyase Xaut_1503 (276 aa).

Belongs to the D-glutamate cyclase family.

This is Putative hydro-lyase Xaut_1503 from Xanthobacter autotrophicus (strain ATCC BAA-1158 / Py2).